Consider the following 239-residue polypeptide: Protein TIPIN homolog (239 aa).

Composition is skewed to acidic residues over residues 1 to 14 and 156 to 166; these read MDEMDDFFGNDELD and DGADDDEDDLF. Disordered regions lie at residues 1-38 and 135-239; these read MDEMDDFFGNDELDREPSPFGEEAIEDNTGEEGSRRII and ESTD…NNDW. Basic and acidic residues-rich tracts occupy residues 169 to 193 and 206 to 223; these read LPEKETPTKPINHTEKVVDSPEKKN and YRMMEEERLREEQEAREA. The span at 224-239 shows a compositional bias: acidic residues; the sequence is EAEDELMEDFDLNNDW.

The protein belongs to the CSM3 family.

Its subcellular location is the cytoplasm. The protein localises to the nucleus. Its function is as follows. Required for normal progression of S-phase. Important for cell survival after DNA damage or replication stress. This chain is Protein TIPIN homolog, found in Caenorhabditis briggsae.